Consider the following 60-residue polypeptide: Sec-independent protein translocase protein TatA (60 aa).

Residues 1-21 form a helical membrane-spanning segment; that stretch reads MTPAGPAQLLIVALVVIVLFG.

It belongs to the TatA/E family. In terms of assembly, the Tat system comprises two distinct complexes: a TatABC complex, containing multiple copies of TatA, TatB and TatC subunits, and a separate TatA complex, containing only TatA subunits. Substrates initially bind to the TatABC complex, which probably triggers association of the separate TatA complex to form the active translocon.

It is found in the cell membrane. Part of the twin-arginine translocation (Tat) system that transports large folded proteins containing a characteristic twin-arginine motif in their signal peptide across membranes. TatA could form the protein-conducting channel of the Tat system. This is Sec-independent protein translocase protein TatA from Corynebacterium glutamicum (strain R).